Consider the following 677-residue polypeptide: Fermitin family homolog 1 (677 aa).

In terms of domain architecture, FERM spans 96-653; the sequence is MLRLRLPNAK…HEYIGGYIFL (558 aa). The disordered stretch occupies residues 157–181; the sequence is KEPVIEDILNLESSSTSSGSPVSPG. The span at 169–181 shows a compositional bias: low complexity; that stretch reads SSSTSSGSPVSPG. Phosphoserine occurs at positions 170 and 179. One can recognise a PH domain in the interval 377-473; sequence KLFRPKKLML…WMAACILASK (97 aa).

It belongs to the kindlin family. Interacts with the cytoplasmic domain of integrins ITGB1 and ITGB3.

The protein localises to the cytoplasm. It is found in the cytoskeleton. Its subcellular location is the cell junction. The protein resides in the focal adhesion. It localises to the cell projection. The protein localises to the ruffle membrane. Involved in cell adhesion. Contributes to integrin activation. When coexpressed with talin, potentiates activation of ITGA2B. Required for normal keratinocyte proliferation. Required for normal polarization of basal keratinocytes in skin, and for normal cell shape. Required for normal adhesion of keratinocytes to fibronectin and laminin, and for normal keratinocyte migration to wound sites. In Mus musculus (Mouse), this protein is Fermitin family homolog 1 (Fermt1).